Reading from the N-terminus, the 785-residue chain is Endonuclease MutS2 (785 aa).

Residue 332–339 participates in ATP binding; the sequence is GPNTGGKT. The Smr domain maps to 710-785; it reads IDLRGLDAEE…GDGATIVELK (76 aa).

This sequence belongs to the DNA mismatch repair MutS family. MutS2 subfamily. As to quaternary structure, homodimer. Binds to stalled ribosomes, contacting rRNA.

Its function is as follows. Endonuclease that is involved in the suppression of homologous recombination and thus may have a key role in the control of bacterial genetic diversity. Acts as a ribosome collision sensor, splitting the ribosome into its 2 subunits. Detects stalled/collided 70S ribosomes which it binds and splits by an ATP-hydrolysis driven conformational change. Acts upstream of the ribosome quality control system (RQC), a ribosome-associated complex that mediates the extraction of incompletely synthesized nascent chains from stalled ribosomes and their subsequent degradation. Probably generates substrates for RQC. The protein is Endonuclease MutS2 of Clostridium botulinum (strain Eklund 17B / Type B).